We begin with the raw amino-acid sequence, 163 residues long: Small ribosomal subunit protein uS3m (163 aa).

The N-terminal 31 residues, 1–31 (MAASLIRQTKLLSVFSSAGCFRSIHSTAACL), are a transit peptide targeting the mitochondrion.

The protein belongs to the universal ribosomal protein uS3 family. As to quaternary structure, component of the mitochondrial ribosome small subunit (28S) which comprises a 12S rRNA and about 30 distinct proteins.

It is found in the mitochondrion. The chain is Small ribosomal subunit protein uS3m (mrps24) from Danio rerio (Zebrafish).